A 66-amino-acid chain; its full sequence is UPF0370 protein CKO_00315 (66 aa).

Residues 4–24 (LAKYWWILVLVFLVGVLINVI) form a helical membrane-spanning segment. The disordered stretch occupies residues 39 to 66 (KPELPPHRDFNDKWDDDDDWPKKDQPKK). The segment covering 42-51 (LPPHRDFNDK) has biased composition (basic and acidic residues).

Belongs to the UPF0370 family.

The protein localises to the cell membrane. This Citrobacter koseri (strain ATCC BAA-895 / CDC 4225-83 / SGSC4696) protein is UPF0370 protein CKO_00315.